The sequence spans 99 residues: Nucleoid-associated protein LACR_0106 (99 aa).

The protein belongs to the YbaB/EbfC family. As to quaternary structure, homodimer.

It is found in the cytoplasm. The protein localises to the nucleoid. Functionally, binds to DNA and alters its conformation. May be involved in regulation of gene expression, nucleoid organization and DNA protection. The sequence is that of Nucleoid-associated protein LACR_0106 from Lactococcus lactis subsp. cremoris (strain SK11).